The sequence spans 245 residues: Exosome complex component RRP41 (245 aa).

A2 is subject to N-acetylalanine.

It belongs to the RNase PH family. In terms of assembly, component of the RNA exosome core complex (Exo-9), composed of EXOSC1, EXOSC2, EXOSC3, EXOSC4, EXOSC5, EXOSC6, EXOSC7, EXOSC8 and EXOSC9; within the complex interacts with EXOSC2, EXOSC7 and EXOSC9. The catalytically inactive RNA exosome core complex (Exo-9) associates with the catalytic subunit EXOSC10/RRP6. Exo-9 may associate with DIS3 to form the nucleolar exosome complex, or DIS3L to form the cytoplasmic exosome complex. Exo-9 is formed by a hexameric base ring consisting of the heterodimers EXOSC4-EXOSC9, EXOSC5-EXOSC8 and EXOSC6-EXOSC7, and a cap ring consisting of EXOSC1, EXOSC2 and EXOSC3. The RNA exosome complex associates with cofactors C1D/RRP47, MPHOSPH6/MPP6 and MTREX/MTR4. Interacts with DDX60. Interacts with DIS3; the interaction is direct.

The protein resides in the cytoplasm. Its subcellular location is the nucleus. It localises to the nucleolus. It is found in the nucleoplasm. Functionally, non-catalytic component of the RNA exosome complex which has 3'-&gt;5' exoribonuclease activity and participates in a multitude of cellular RNA processing and degradation events. In the nucleus, the RNA exosome complex is involved in proper maturation of stable RNA species such as rRNA, snRNA and snoRNA, in the elimination of RNA processing by-products and non-coding 'pervasive' transcripts, such as antisense RNA species and promoter-upstream transcripts (PROMPTs), and of mRNAs with processing defects, thereby limiting or excluding their export to the cytoplasm. The RNA exosome may be involved in Ig class switch recombination (CSR) and/or Ig variable region somatic hypermutation (SHM) by targeting AICDA deamination activity to transcribed dsDNA substrates. In the cytoplasm, the RNA exosome complex is involved in general mRNA turnover and specifically degrades inherently unstable mRNAs containing AU-rich elements (AREs) within their 3' untranslated regions, and in RNA surveillance pathways, preventing translation of aberrant mRNAs. It seems to be involved in degradation of histone mRNA. The catalytic inactive RNA exosome core complex of 9 subunits (Exo-9) is proposed to play a pivotal role in the binding and presentation of RNA for ribonucleolysis, and to serve as a scaffold for the association with catalytic subunits and accessory proteins or complexes. EXOSC4 binds to ARE-containing RNAs. This Mus musculus (Mouse) protein is Exosome complex component RRP41 (Exosc4).